The primary structure comprises 174 residues: 2-C-methyl-D-erythritol 2,4-cyclodiphosphate synthase (174 aa).

A divalent metal cation contacts are provided by Asp13, His15, and His61. Position 13 to 15 (Asp13 to His15) interacts with 4-CDP-2-C-methyl-D-erythritol 2-phosphate. 4-CDP-2-C-methyl-D-erythritol 2-phosphate-binding positions include Asp75 to Gly77, Thr149 to Asp152, Phe156, and Arg159.

The protein belongs to the IspF family. Homotrimer. A divalent metal cation serves as cofactor.

The catalysed reaction is 4-CDP-2-C-methyl-D-erythritol 2-phosphate = 2-C-methyl-D-erythritol 2,4-cyclic diphosphate + CMP. The protein operates within isoprenoid biosynthesis; isopentenyl diphosphate biosynthesis via DXP pathway; isopentenyl diphosphate from 1-deoxy-D-xylulose 5-phosphate: step 4/6. In terms of biological role, involved in the biosynthesis of isopentenyl diphosphate (IPP) and dimethylallyl diphosphate (DMAPP), two major building blocks of isoprenoid compounds. Catalyzes the conversion of 4-diphosphocytidyl-2-C-methyl-D-erythritol 2-phosphate (CDP-ME2P) to 2-C-methyl-D-erythritol 2,4-cyclodiphosphate (ME-CPP) with a corresponding release of cytidine 5-monophosphate (CMP). This is 2-C-methyl-D-erythritol 2,4-cyclodiphosphate synthase from Bifidobacterium longum subsp. infantis (strain ATCC 15697 / DSM 20088 / JCM 1222 / NCTC 11817 / S12).